Consider the following 336-residue polypeptide: Aldehyde reductase AdhA (336 aa).

The Zn(2+) site is built by C36, C39, H61, C92, C95, C98, C106, and C148.

Belongs to the zinc-containing alcohol dehydrogenase family. Homotetramer. The cofactor is Zn(2+).

Its subcellular location is the cytoplasm. It catalyses the reaction a primary alcohol + NADP(+) = an aldehyde + NADPH + H(+). Active on a wide variety of primary alcohols and their corresponding aldehydes, but not against ketones nor secondary alcohols. Active on aliphatic compounds up to 5 carbons in length and aromatic alcohols, less effective on branched-chain primary alcohols. Prefers NADPH to NADH. Its catalytic efficiency is greatest for aldehydes, suggesting the reduction of aromatic and medium-chain aliphatic aldehydes is its in vivo activity. Plays a role in tolerance to internally produced ethanol. This chain is Aldehyde reductase AdhA, found in Synechocystis sp. (strain ATCC 27184 / PCC 6803 / Kazusa).